A 445-amino-acid chain; its full sequence is Enolase 2 (445 aa).

Residues histidine 164 and glutamate 173 each coordinate substrate. The active-site Proton donor is glutamate 216. The Mg(2+) site is built by aspartate 251, glutamate 301, and aspartate 328. Substrate contacts are provided by glutamate 301 and aspartate 328. Catalysis depends on lysine 353, which acts as the Proton acceptor. Residues 380-383 and lysine 404 each bind substrate; that span reads SHRS.

The protein belongs to the enolase family. As to quaternary structure, homodimer. Mg(2+) serves as cofactor.

Its subcellular location is the cytoplasm. It carries out the reaction (2R)-2-phosphoglycerate = phosphoenolpyruvate + H2O. It functions in the pathway carbohydrate degradation; glycolysis; pyruvate from D-glyceraldehyde 3-phosphate: step 4/5. This chain is Enolase 2 (ENO2), found in Hevea brasiliensis (Para rubber tree).